A 470-amino-acid chain; its full sequence is Putative F-box/LRR-repeat protein At3g58920 (470 aa).

In terms of domain architecture, F-box spans 1–53 (MDRISNLPNEIICHIVSFLSAKEAAFASVLSKRWQNLFTIVQKLEFDDSVKNQ). LRR repeat units lie at residues 114 to 142 (KLEI…KLTS), 143 to 170 (CIFA…FLKS), 173 to 198 (FSDL…TIYD), 225 to 250 (FTYF…KYID), 287 to 312 (EDDP…HLST), and 342 to 367 (YECF…MIKG).

This Arabidopsis thaliana (Mouse-ear cress) protein is Putative F-box/LRR-repeat protein At3g58920.